Consider the following 429-residue polypeptide: MIDHKLIIKNIEEVCKKLILRNFYLDKKKILLQDQKRKILQIEVEKLQNKRNLQSKIISKIKINNKNIDIYKNKSNKINILLNEKKQKLKKIKKEIDNYLSTIPNILDEKVPIGKDQKNNIEVKKWGSPKIYNFKIKSHVEIGEKIKYLDFSRSAKISGSRFVVMKNKISYMHRALSQFMLNLHTNQHGYEEYYVPYLVNKNMLYGTGQLPKFYNDFFYAKSFFEDIQSCYALIPTAEVPLTNLMRNEIIDENYLPIKMTSHTPCFRSEAGSYGKDTKGLIRMHQFDKVEIVQIVSPENSIKALEEITHHAERVLQLLDLPYRKILLCSGDTGFSSCKTYDLEVWMPSRNKYIEVSSCSNTSDFQSRRTKIRYRKISNKEIHLTHILNGSALAISRTLASIIENYQTKEGNIKVPKILQPYMDGLKLIK.

236–238 (TAE) contributes to the L-serine binding site. An ATP-binding site is contributed by 267 to 269 (RSE). Residue glutamate 290 participates in L-serine binding. Residue 354-357 (EVSS) participates in ATP binding. Serine 390 is an L-serine binding site.

The protein belongs to the class-II aminoacyl-tRNA synthetase family. Type-1 seryl-tRNA synthetase subfamily. In terms of assembly, homodimer. The tRNA molecule binds across the dimer.

It is found in the cytoplasm. It carries out the reaction tRNA(Ser) + L-serine + ATP = L-seryl-tRNA(Ser) + AMP + diphosphate + H(+). The catalysed reaction is tRNA(Sec) + L-serine + ATP = L-seryl-tRNA(Sec) + AMP + diphosphate + H(+). It participates in aminoacyl-tRNA biosynthesis; selenocysteinyl-tRNA(Sec) biosynthesis; L-seryl-tRNA(Sec) from L-serine and tRNA(Sec): step 1/1. Functionally, catalyzes the attachment of serine to tRNA(Ser). Is also able to aminoacylate tRNA(Sec) with serine, to form the misacylated tRNA L-seryl-tRNA(Sec), which will be further converted into selenocysteinyl-tRNA(Sec). This Wigglesworthia glossinidia brevipalpis protein is Serine--tRNA ligase.